The chain runs to 290 residues: MAECDGKCDTCPSKNTCPDTKKLLAQQDAKIRENMSKIKHKIVILSGKGGVGKSTVTVNLAAALNLMGKKVGVLDADIHGPNIPKMLGVENTQPMAGPAGIFPIVTKDGIKTMSIGYLLPDDKTPVIWRGPKVSGAIRQFLSDVVWGELDYLLIDTPPGTGDEQLTIMQSIPDIDGAIIVTTPEEVSVLDVKKSIMMAKMLNIPIIGIIENMSGFVCPYCNKVVDIFGRGGGEKAAKELGVEFLGRIPLDIKAREASDKGIPMVLLDCKASEEFKKIVKRIVEKVEGKKE.

Residue 47-54 (GKGGVGKS) coordinates ATP.

It belongs to the Mrp/NBP35 ATP-binding proteins family. Homodimer.

Its function is as follows. Binds and transfers iron-sulfur (Fe-S) clusters to target apoproteins. Can hydrolyze ATP. The sequence is that of Iron-sulfur cluster carrier protein from Methanocaldococcus jannaschii (strain ATCC 43067 / DSM 2661 / JAL-1 / JCM 10045 / NBRC 100440) (Methanococcus jannaschii).